We begin with the raw amino-acid sequence, 777 residues long: Myotubularin-related protein 10 (777 aa).

Residues 196-217 form a disordered region; it reads PSGDGGGGGGGGNGAGGGSSQK. A compositionally biased stretch (gly residues) spans 197 to 214; sequence SGDGGGGGGGGNGAGGGS. Residues 221–661 form the Myotubularin phosphatase domain; that stretch reads FETYSDWDRE…THIKLWKLCY (441 aa). S607 and S751 each carry phosphoserine.

This sequence belongs to the protein-tyrosine phosphatase family. Non-receptor class myotubularin subfamily.

This Homo sapiens (Human) protein is Myotubularin-related protein 10 (MTMR10).